A 464-amino-acid polypeptide reads, in one-letter code: MKFLLLILTLWVTSSGADPLKENDMLFAENYLENFYGLKVERIPMTKMKTNRNFIEEKVQEMQQFLGLNVTGQLDTSTLEMMHKPRCGVPDVYHFKTMPGRPVWRKHYITYRIKNYTPDMKREDVEYAIQKAFQVWSDVTPLKFRKITTGKADIMILFASGAHGDYGAFDGRGGVIAHAFGPGPGIGGDTHFDEDEIWSKSYKGTNLFLVAVHELGHALGLDHSNDPKAIMFPTYGYIDLNTFHLSADDIRGIQSLYGGPEQHQPMPKPDNPEPTACDHNLKFDAVTTVGNKIFFFKDSFFWWKIPKSSTTSVRLISSLWPTLPSGIEAAYEIGDRHQVFLFKGDKFWLISHLRLQPNYPKSIHSLGFPDFVKKIDAAVFNPSLRKTYFFVDNLYWRYDERREVMDAGYPKLITKHFPGIGPKIDAVFYFQRYYYFFQGPNQLEYDTFSSRVTKKLKSNSWFDC.

A signal peptide spans 1–17 (MKFLLLILTLWVTSSGA). Residues 18-100 (DPLKENDMLF…DVYHFKTMPG (83 aa)) constitute a propeptide, activation peptide. Asn69 is a glycosylation site (N-linked (GlcNAc...) asparagine). The short motif at 85-92 (PRCGVPDV) is the Cysteine switch element. Residue Cys87 participates in Zn(2+) binding. Ca(2+)-binding residues include Asp119 and Asp153. Zn(2+) is bound by residues His163 and Asp165. Residues Asp170, Gly171, Gly173, and Val175 each coordinate Ca(2+). His178 is a binding site for Zn(2+). Gly185, Gly187, and Asp189 together coordinate Ca(2+). Residue His191 coordinates Zn(2+). 3 residues coordinate Ca(2+): Asp193, Glu194, and Glu196. Residue His213 coordinates Zn(2+). Glu214 is a catalytic residue. Positions 217 and 223 each coordinate Zn(2+). Hemopexin repeat units lie at residues 274–323 (PTAC…WPTL), 324–370 (PSGI…GFPD), 372–420 (VKKI…FPGI), and 421–464 (GPKI…WFDC). The cysteines at positions 277 and 464 are disulfide-linked. Residues Asp284, Glu328, Asp376, and Asp425 each coordinate Ca(2+).

Belongs to the peptidase M10A family. Ca(2+) is required as a cofactor. The cofactor is Zn(2+).

Its subcellular location is the secreted. The protein resides in the extracellular space. It is found in the extracellular matrix. The enzyme catalyses Hydrolysis of soluble and insoluble elastin. Specific cleavages are also produced at 14-Ala-|-Leu-15 and 16-Tyr-|-Leu-17 in the B chain of insulin.. In terms of biological role, may be involved in tissue injury and remodeling. Has significant elastolytic activity. Can accept large and small amino acids at the P1' site, but has a preference for leucine. Aromatic or hydrophobic residues are preferred at the P1 site, with small hydrophobic residues (preferably alanine) occupying P3. The protein is Macrophage metalloelastase (MMP12) of Oryctolagus cuniculus (Rabbit).